The following is a 251-amino-acid chain: Enolase-phosphatase E1 (251 aa).

The Mg(2+) site is built by aspartate 13 and glutamate 15. Substrate-binding positions include 137-138 and lysine 183; that span reads SS. Residue aspartate 210 participates in Mg(2+) binding.

Belongs to the HAD-like hydrolase superfamily. MasA/MtnC family. As to quaternary structure, monomer. Mg(2+) serves as cofactor.

It is found in the cytoplasm. It localises to the nucleus. The enzyme catalyses 5-methylsulfanyl-2,3-dioxopentyl phosphate + H2O = 1,2-dihydroxy-5-(methylsulfanyl)pent-1-en-3-one + phosphate. It participates in amino-acid biosynthesis; L-methionine biosynthesis via salvage pathway; L-methionine from S-methyl-5-thio-alpha-D-ribose 1-phosphate: step 3/6. Its pathway is amino-acid biosynthesis; L-methionine biosynthesis via salvage pathway; L-methionine from S-methyl-5-thio-alpha-D-ribose 1-phosphate: step 4/6. Functionally, bifunctional enzyme that catalyzes the enolization of 2,3-diketo-5-methylthiopentyl-1-phosphate (DK-MTP-1-P) into the intermediate 2-hydroxy-3-keto-5-methylthiopentenyl-1-phosphate (HK-MTPenyl-1-P), which is then dephosphorylated to form the acireductone 1,2-dihydroxy-3-keto-5-methylthiopentene (DHK-MTPene). The polypeptide is Enolase-phosphatase E1 (Candida glabrata (strain ATCC 2001 / BCRC 20586 / JCM 3761 / NBRC 0622 / NRRL Y-65 / CBS 138) (Yeast)).